The following is an 809-amino-acid chain: MTLTRREFIKHSGIAAGTLVVTSAAPLPAWAEEKGGKILTAGRWGAMNVEVKDGKIVSSTGALAKTIPNSLQSTAADQVHTTARIQHPMVRKSYLDNPLQPVKGRGEDTYVQVSWEQALKLIHEQHDRIRKANGPSAIFAGSYGWRSSGVLHKAQTLLQRYMNLAGGYSGHSGDYSTGAAQVIMPHVVGSVEVYEQQTSWPLILENSQVVVLWGMNPLNTLKIAWSSTDEQGLEYFHQLKKSGKPVIAIDPIRSETIEFFGDNATWIAPNMGTDVALMLGIAHTLMTQGKHDKVFLEKYTTGYPQFEEYLTGKSDNTPKSAAWAAEITGVPEAQIVKLAELMAANRTMLMAGWGIQRQQYGEQKHWMLVTLAAMLGQIGTPGGGFGFSYHYSNGGNPTRVGGVLPEMSAAIAGQASEAADDGGMTAIPVARIVDALENPGGKYQHNGKEQTYPNIKMIWWAGGGNFTHHQDTNRLIKAWQKPEMIVVSECYWTAAAKHADIVLPITTSFERNDLTMTGDYSNQHIVLMKQAVAPQFEARNDFDVFADLAELLKPGGKEIYTEGKDEMAWLKFFYDAAQKGARAQRVTMPMFNAFWQQNKLIEMRRSEKNEQYIRYGDFRADPVKNALGTPSGKIEIYSRTLEKFGYKDCPAHPTWLAPDEWKGTADEKQLQLLTAHPAHRLHSQLNYAELRKKYAVADREPITIHTEDAARFGIANGDLVRVWNKRGQILTGAVVTDGIKKGVVCVHEGAWPDLENGLCKNGSANVLTADIPSSQLANACAGNSALVYIEKYTGNALKLTAFDQPAVQA.

A signal peptide (tat-type signal) is located at residues 1-31 (MTLTRREFIKHSGIAAGTLVVTSAAPLPAWA). Serine 176 serves as a coordination point for Mo-bis(molybdopterin guanine dinucleotide).

Belongs to the prokaryotic molybdopterin-containing oxidoreductase family. It depends on Mo-bis(molybdopterin guanine dinucleotide) as a cofactor. Post-translationally, predicted to be exported by the Tat system. The position of the signal peptide cleavage has not been experimentally proven.

Its subcellular location is the periplasm. It catalyses the reaction trimethylamine + 2 Fe(III)-[cytochrome c] + H2O = trimethylamine N-oxide + 2 Fe(II)-[cytochrome c] + 3 H(+). Reduces trimethylamine-N-oxide (TMAO) into trimethylamine; an anaerobic reaction coupled to energy-yielding reactions. Can also reduce other N- and S-oxide compounds such as 4-methylmorpholine-N-oxide and biotin sulfoxide (BSO), but with a lower catalytic efficiency. The sequence is that of Trimethylamine-N-oxide reductase 2 (torZ) from Escherichia coli O6:H1 (strain CFT073 / ATCC 700928 / UPEC).